We begin with the raw amino-acid sequence, 1933 residues long: WD repeat-containing protein 81 (1933 aa).

The tract at residues 1-643 (MAQGSRRRKV…TPCESGWTRE (643 aa)) is necessary and sufficient for the interaction with SQSTM1. Disordered stretches follow at residues 305–334 (PSED…RPGC), 663–714 (SIPG…GKIV), 1038–1057 (CAFG…SGLG), 1090–1209 (QPQE…EGKE), 1517–1544 (SLRN…SCLQ), and 1565–1590 (DSQP…SRNE). The segment covering 314-330 (SEEKDRTGVKSEKDGEG) has biased composition (basic and acidic residues). The 278-residue stretch at 333-610 (GCPTCQKELR…IPRLLVQPIQ (278 aa)) folds into the BEACH domain. The span at 668-693 (AGDQPGSSSSQASPGLLPFSAPSGSR) shows a compositional bias: low complexity. 2 stretches are compositionally biased toward polar residues: residues 1100–1112 (GQLS…SEAS) and 1131–1140 (VKSGDSSQDL). Residues 1145 to 1166 (GSEEEEEEEEGCVVLEEEEQDE) show a composition bias toward acidic residues. WD repeat units follow at residues 1638-1677 (GHTG…DGTS), 1684-1724 (IYAQ…TLRT), 1776-1815 (LNPG…VLRG), 1818-1856 (AHEG…PTHH), and 1903-1933 (NFRG…RLLA).

Belongs to the WD repeat WDR81 family. Interacts with WDR91; involved in early to late endosome cargo transport. Interacts with BECN1; negatively regulates the PI3 kinase/PI3K activity associated with endosomal membranes. Interacts with SQSTM1; the interaction is direct and regulates the interaction of SQSTM1 with ubiquitinated proteins. Interacts with MAP1LC3C; recruits MAP1LC3C to ubiquitinated protein aggregates in the aggrephagy process.

It is found in the early endosome membrane. The protein resides in the late endosome membrane. It localises to the lysosome membrane. Its subcellular location is the cytoplasmic vesicle. The protein localises to the autophagosome membrane. It is found in the mitochondrion. The protein resides in the cytoplasm. It localises to the cytosol. In terms of biological role, functions as a negative regulator of the PI3 kinase/PI3K activity associated with endosomal membranes via BECN1, a core subunit of the PI3K complex. By modifying the phosphatidylinositol 3-phosphate/PtdInsP3 content of endosomal membranes may regulate endosome fusion, recycling, sorting and early to late endosome transport. It is for instance, required for the delivery of cargos like BST2/tetherin from early to late endosome and thereby participates indirectly to their degradation by the lysosome. May also play a role in aggrephagy, the macroautophagic degradation of ubiquitinated protein aggregates. In this process, may regulate the interaction of SQSTM1 with ubiquitinated proteins and also recruit MAP1LC3C. May also be involved in maintenance of normal mitochondrial structure and organization. The chain is WD repeat-containing protein 81 from Rattus norvegicus (Rat).